The primary structure comprises 213 residues: Small ribosomal subunit protein uS3 (213 aa).

In terms of domain architecture, KH type-2 spans 38–106; it reads IRAFVKKLLY…EFSLEVNEIR (69 aa).

It belongs to the universal ribosomal protein uS3 family. Part of the 30S ribosomal subunit. Forms a tight complex with proteins S10 and S14.

Binds the lower part of the 30S subunit head. Binds mRNA in the 70S ribosome, positioning it for translation. This chain is Small ribosomal subunit protein uS3, found in Desulfovibrio desulfuricans (strain ATCC 27774 / DSM 6949 / MB).